A 559-amino-acid chain; its full sequence is Methionine--tRNA ligase (559 aa).

A 'HIGH' region motif is present at residues 10 to 20 (PYINAVPHLGT). Residues Cys-141, Cys-144, Cys-154, and Cys-157 each coordinate Zn(2+). Residues 331-335 (KFSKS) carry the 'KMSKS' region motif. An ATP-binding site is contributed by Lys-334.

This sequence belongs to the class-I aminoacyl-tRNA synthetase family. MetG type 1 subfamily. Zn(2+) is required as a cofactor.

The protein localises to the cytoplasm. It carries out the reaction tRNA(Met) + L-methionine + ATP = L-methionyl-tRNA(Met) + AMP + diphosphate. Its function is as follows. Is required not only for elongation of protein synthesis but also for the initiation of all mRNA translation through initiator tRNA(fMet) aminoacylation. In Korarchaeum cryptofilum (strain OPF8), this protein is Methionine--tRNA ligase.